We begin with the raw amino-acid sequence, 108 residues long: Peptidyl-prolyl cis-trans isomerase FKBP1A (108 aa).

Positions 20–108 (GQTCVVHYTG…VFDVELLKLE (89 aa)) constitute a PPIase FKBP-type domain. At Lys53 the chain carries N6-acetyllysine; alternate. Residue Lys53 is modified to N6-succinyllysine; alternate.

The protein belongs to the FKBP-type PPIase family. FKBP1 subfamily. Interacts with TGFBR1; prevents TGFBR1 phosphorylation by TGFBR2 and stabilizes it in the inactive conformation. Interacts with ACVR1B and SMAD7. Identified in a complex composed of RYR1, PDE4D, PKA, FKBP1A and protein phosphatase 1 (PP1). Interacts directly with RYR2 and RYR3. Interacts directly with RYR1. Interacts with GLMN; rapamycin and FK506 abolish the interaction with GLMN in a dose dependent manner.

It is found in the cytoplasm. The protein resides in the cytosol. It localises to the sarcoplasmic reticulum membrane. The enzyme catalyses [protein]-peptidylproline (omega=180) = [protein]-peptidylproline (omega=0). With respect to regulation, inhibited by both FK506 and rapamycin. Its function is as follows. Keeps in an inactive conformation TGFBR1, the TGF-beta type I serine/threonine kinase receptor, preventing TGF-beta receptor activation in absence of ligand. Recruits SMAD7 to ACVR1B which prevents the association of SMAD2 and SMAD3 with the activin receptor complex, thereby blocking the activin signal. May modulate the RYR1 calcium channel activity. PPIases accelerate the folding of proteins. It catalyzes the cis-trans isomerization of proline imidic peptide bonds in oligopeptides. The protein is Peptidyl-prolyl cis-trans isomerase FKBP1A (Fkbp1a) of Mus musculus (Mouse).